We begin with the raw amino-acid sequence, 229 residues long: E3 ubiquitin ligase TRIM40 (229 aa).

The RING-type zinc-finger motif lies at 14 to 57 (CPICQESLKEAVSTNCGHLFCRVCLTQHVEKASASGVFCCPLCR). The segment at 66–107 (GTGYICPNHQKRVCRFCEESRLLLCVECLVSPEHMSHHELTI) adopts a B box-type zinc-finger fold. Residues cysteine 71, histidine 74, cysteine 93, and histidine 99 each coordinate Zn(2+). The stretch at 107–154 (IENALSHYKERLNRRSRKLRKDIAELQRLKAQQEKKLQALQQWLGQLE) forms a coiled coil.

The protein belongs to the TRIM/RBCC family. Interacts with NEDD8.

It catalyses the reaction S-ubiquitinyl-[E2 ubiquitin-conjugating enzyme]-L-cysteine + [acceptor protein]-L-lysine = [E2 ubiquitin-conjugating enzyme]-L-cysteine + N(6)-ubiquitinyl-[acceptor protein]-L-lysine.. Functionally, E3 ubiquitin-protein ligase that plays a role in the limitation of the innate immune response. Mediates inhibition of the RLR signaling pathway by ubiquitinating RIGI and IFIH1 receptors, leading to their proteasomal degradation. Also promotes the neddylation of IKBKG/NEMO, stabilizing NFKBIA, and thereby inhibiting of NF-kappa-B nuclear translocation and activation. This chain is E3 ubiquitin ligase TRIM40 (TRIM40), found in Pan troglodytes (Chimpanzee).